The primary structure comprises 79 residues: RNA-binding protein Hfq (79 aa).

The Sm domain occupies 9-69; it reads DTFLNHLRKE…ISTFTPQRPV (61 aa).

Belongs to the Hfq family. Homohexamer.

Its function is as follows. RNA chaperone that binds small regulatory RNA (sRNAs) and mRNAs to facilitate mRNA translational regulation in response to envelope stress, environmental stress and changes in metabolite concentrations. Also binds with high specificity to tRNAs. This chain is RNA-binding protein Hfq, found in Brevibacillus brevis (strain 47 / JCM 6285 / NBRC 100599).